We begin with the raw amino-acid sequence, 83 residues long: Small ribosomal subunit protein bS16 (83 aa).

The protein belongs to the bacterial ribosomal protein bS16 family.

This is Small ribosomal subunit protein bS16 from Pseudomonas entomophila (strain L48).